We begin with the raw amino-acid sequence, 134 residues long: Cytochrome b (134 aa).

A run of 3 helical transmembrane segments spans residues 33–53 (FGSL…FLAM), 77–98 (WLLR…YLHV), and 113–133 (WNIG…GYVL). Heme b-binding residues include His83 and His97.

Belongs to the cytochrome b family. The cytochrome bc1 complex contains 11 subunits: 3 respiratory subunits (MT-CYB, CYC1 and UQCRFS1), 2 core proteins (UQCRC1 and UQCRC2) and 6 low-molecular weight proteins (UQCRH/QCR6, UQCRB/QCR7, UQCRQ/QCR8, UQCR10/QCR9, UQCR11/QCR10 and a cleavage product of UQCRFS1). This cytochrome bc1 complex then forms a dimer. Requires heme b as cofactor.

It is found in the mitochondrion inner membrane. Its function is as follows. Component of the ubiquinol-cytochrome c reductase complex (complex III or cytochrome b-c1 complex) that is part of the mitochondrial respiratory chain. The b-c1 complex mediates electron transfer from ubiquinol to cytochrome c. Contributes to the generation of a proton gradient across the mitochondrial membrane that is then used for ATP synthesis. The polypeptide is Cytochrome b (MT-CYB) (Sturnira tildae (Tilda's yellow-shouldered bat)).